The chain runs to 326 residues: MSSRSLSAIVLLLGALVTACLASNGDRTQFFHNCRQNCERTNCSADGLEIQEQAVKFYQQSVFDRLFQWSCADECQYGCMWRTVFAFFERGWPIPQFYGKWPFLRLLGMQEPASVIFSCLNFVVHLRLLRKFRREVRPDSPCYMLTHIFAVTSLNGWIWSAIFHTRDFPLTELLDYAFAYSIILCSLYVMVMRMLHRYSLFLRGVITLAFLSYYINYFAYLSVGRFNYAFNMMVNVATGVIAAVGWFVWCHFVRTRRPYFRRILRFYILMALAMSLELLDFPPILWILDAHALWHLATIPLASLYYECVEILLYSNIATCVCILAS.

An N-terminal signal peptide occupies residues 1-22 (MSSRSLSAIVLLLGALVTACLA). The Lumenal portion of the chain corresponds to 23 to 105 (SNGDRTQFFH…QFYGKWPFLR (83 aa)). Asparagine 42 carries an N-linked (GlcNAc...) asparagine glycan. Residues 106–126 (LLGMQEPASVIFSCLNFVVHL) traverse the membrane as a helical segment. Topologically, residues 127–142 (RLLRKFRREVRPDSPC) are cytoplasmic. Residues 143-163 (YMLTHIFAVTSLNGWIWSAIF) form a helical membrane-spanning segment. Residues 164–171 (HTRDFPLT) lie on the Lumenal side of the membrane. The helical transmembrane segment at 172–192 (ELLDYAFAYSIILCSLYVMVM) threads the bilayer. Residues 193–203 (RMLHRYSLFLR) are Cytoplasmic-facing. Residues 204-224 (GVITLAFLSYYINYFAYLSVG) traverse the membrane as a helical segment. Residues 225–232 (RFNYAFNM) lie on the Lumenal side of the membrane. The chain crosses the membrane as a helical span at residues 233–253 (MVNVATGVIAAVGWFVWCHFV). Over 254–267 (RTRRPYFRRILRFY) the chain is Cytoplasmic. The chain crosses the membrane as a helical span at residues 268–288 (ILMALAMSLELLDFPPILWIL). The Lumenal segment spans residues 289–302 (DAHALWHLATIPLA). Residues 303 to 325 (SLYYECVEILLYSNIATCVCILA) form a helical membrane-spanning segment. Residue serine 326 is a topological domain, cytoplasmic.

It belongs to the PGAP3 family.

The protein localises to the golgi apparatus membrane. In terms of biological role, involved in the lipid remodeling steps of GPI-anchor maturation. The chain is Post-GPI attachment to proteins factor 3 (PGAP3) from Drosophila melanogaster (Fruit fly).